An 82-amino-acid polypeptide reads, in one-letter code: Probable tautomerase XF_1725 (82 aa).

Catalysis depends on proline 2, which acts as the Proton acceptor; via imino nitrogen.

It belongs to the 4-oxalocrotonate tautomerase family.

This chain is Probable tautomerase XF_1725, found in Xylella fastidiosa (strain 9a5c).